The following is a 160-amino-acid chain: ADP-ribose 1''-phosphate phosphatase (160 aa).

In terms of domain architecture, Macro spans 1-160; the sequence is MTVKYIRGDL…SLDFNVYVID (160 aa). Substrate is bound by residues 8 to 10, 26 to 28, 33 to 38, and 130 to 136; these read GDL, ACN, WGGGIA, and INSGIFG.

Belongs to the POA1 family.

It catalyses the reaction ADP-alpha-D-ribose 1''-phosphate + H2O = ADP-D-ribose + phosphate. Highly specific phosphatase involved in the metabolism of ADP-ribose 1''-phosphate (Appr1p) which is produced as a consequence of tRNA splicing. Removes ADP-ribose from glutamate residues in proteins bearing a single ADP-ribose moiety. Inactive towards proteins bearing poly-ADP-ribose. This Lodderomyces elongisporus (strain ATCC 11503 / CBS 2605 / JCM 1781 / NBRC 1676 / NRRL YB-4239) (Yeast) protein is ADP-ribose 1''-phosphate phosphatase (POA1).